The primary structure comprises 280 residues: Protein IMPACT homolog (280 aa).

Residues 9-109 enclose the RWD domain; that stretch reads DELLALESIY…QAAAERESKL (101 aa).

The protein belongs to the IMPACT family. Interacts (via N-terminus) with gcn1 (via C-terminus); this interaction reduces the gcn1-gcn20 complex formation and prevents the interaction of gcn1 with gcn2 protein kinase and gcn2 activation in amino acid-starved cells. Interacts (via C-terminus) with act1; this interaction occurs in a gcn1-independent manner. Interacts with rpl39; this interaction occurs in a gcn1-independent manner. Associates (via middle region) with ribosomes; this association occurs in a gcn1-independent manner and persists under amino acid starvation conditions.

The protein localises to the cytoplasm. It is found in the nucleus. Functionally, translational regulator that ensures constant high levels of translation under amino acid starvation. Plays a role as a negative regulator of the gcn2 kinase activity; impairs gcn1-mediated gcn2 activation, and hence gcn2-mediated eIF-2-alpha phosphorylation in amino acid-starved cells and subsequent down-regulation of protein synthesis. In normal conditions, it resides in a actin complex and has no activity. The protein is Protein IMPACT homolog (yih1) of Schizosaccharomyces pombe (strain 972 / ATCC 24843) (Fission yeast).